A 136-amino-acid polypeptide reads, in one-letter code: Organic hydroperoxide resistance protein OhrB (136 aa).

The protein belongs to the OsmC/Ohr family.

Its function is as follows. Involved in organic hydroperoxide resistance. This Bacillus subtilis (strain 168) protein is Organic hydroperoxide resistance protein OhrB (ohrB).